A 211-amino-acid polypeptide reads, in one-letter code: Protein-L-isoaspartate O-methyltransferase (211 aa).

Ser-62 is an active-site residue.

It belongs to the methyltransferase superfamily. L-isoaspartyl/D-aspartyl protein methyltransferase family.

The protein localises to the cytoplasm. It carries out the reaction [protein]-L-isoaspartate + S-adenosyl-L-methionine = [protein]-L-isoaspartate alpha-methyl ester + S-adenosyl-L-homocysteine. In terms of biological role, catalyzes the methyl esterification of L-isoaspartyl residues in peptides and proteins that result from spontaneous decomposition of normal L-aspartyl and L-asparaginyl residues. It plays a role in the repair and/or degradation of damaged proteins. The sequence is that of Protein-L-isoaspartate O-methyltransferase from Shewanella frigidimarina (strain NCIMB 400).